Here is a 509-residue protein sequence, read N- to C-terminus: Ribonuclease Y (509 aa).

A helical transmembrane segment spans residues 1-21 (MIILVAVVTAVISFGLGYVVA). Residues 199–259 (TVSTVSLPSD…IRREIARLTL (61 aa)) form the KH domain. The region spanning 325-418 (VLDHSIEVAQ…VAAADALSAA (94 aa)) is the HD domain.

It belongs to the RNase Y family.

The protein resides in the cell membrane. Its function is as follows. Endoribonuclease that initiates mRNA decay. This chain is Ribonuclease Y, found in Pseudothermotoga lettingae (strain ATCC BAA-301 / DSM 14385 / NBRC 107922 / TMO) (Thermotoga lettingae).